The sequence spans 363 residues: Putative replication factor C small subunit L510 (363 aa).

47 to 54 (GPPGTGKT) contributes to the ATP binding site.

The protein belongs to the activator 1 small subunits family. RfcS subfamily.

In terms of biological role, part of the RFC clamp loader complex which loads the PCNA sliding clamp onto DNA. This Acanthamoeba polyphaga mimivirus (APMV) protein is Putative replication factor C small subunit L510.